Reading from the N-terminus, the 396-residue chain is MELDHMTTGGLHAYPAPRGGPAAKPNVILQIGKCRAEMLEHVRRTHRHLLTEVSKQVERELKGLHRSVGKLENNLDGYVPTGDSQRWKKSIKACLCRCQETIANLERWVKREMHVWREVFYRLERWADRLESMGGKYPVGSEPARHTVSVGVGGPEPYCQEADGYDYTVSPYAITPPPAAGELPEQESVEAQQYQSWGPGEDGQPSPGVDTQIFEDPREFLSHLEEYLRQVGGSEEYWLSQIQNHMNGPAKKWWEFKQGSVKNWVEFKKEFLQYSEGTLSREAIQRELELPQKQGEPLDQFLWRKRDLYQTLYVDAEEEEIIQYVVGTLQPKLKRFLRHPLPKTLEQLIQRGMEVQDGLEQAAEPSGTPLPTEDETEALTPALTSESVASDRTQPE.

The stretch at 54-78 (SKQVERELKGLHRSVGKLENNLDGY) forms a coiled coil. Residues 89–100 (KSIKACLCRCQE) form an interaction with SH3GL1 or SH3GL3 region. The interval 177–207 (PPAAGELPEQESVEAQQYQSWGPGEDGQPSP) is disordered. Residues 195-214 (QSWGPGEDGQPSPGVDTQIF) form an interaction with DNM2 region. S260 is modified (phosphoserine; by CaMK2). Glycyl lysine isopeptide (Lys-Gly) (interchain with G-Cter in ubiquitin) cross-links involve residues K268 and K269. The residue at position 278 (T278) is a Phosphothreonine. Positions 356-396 (QDGLEQAAEPSGTPLPTEDETEALTPALTSESVASDRTQPE) are disordered. A compositionally biased stretch (polar residues) spans 382–396 (ALTSESVASDRTQPE).

It belongs to the ARC/ARG3.1 family. Homooligomer; homooligomerizes into virion-like capsids. Interacts with SH3GL1/endophilin-2, SH3GL3/endophilin-3 and DNM2/DYN2. Interacts with CAMK2B (in the kinase inactive state); leading to target ARC to inactive synapses. Interacts with PSEN1. Interacts with GRIN2A and GRIN2B; inhibiting homooligomerization. In terms of processing, ubiquitinated by UBE3A, leading to its degradation by the proteasome, thereby promoting AMPA receptors (AMPARs) expression at synapses. Ubiquitinated by RNF216 at Lys-268 and Lys-269 limiting ARC protein levels induced by synaptic activity and thus regulating ARC-dependent forms of synaptic plasticity. Palmitoylation anchors the protein into the membrane by allowing direct insertion into the hydrophobic core of the lipid bilayer. Post-translationally, phosphorylation at Ser-260 by CaMK2 prevents homooligomerization into virion-like capsids by disrupting an interaction surface essential for high-order oligomerization. Phosphorylation by CaMK2 inhibits synaptic activity. Expressed in brain and testis. In primary visual cortex, detected in all cortical layers with the exception of layer 5: present at highest level in layers 2/3 and 4, the predominant sites of ocular dominance plasticity (at protein level). Also expressed in skin-migratory dendritic cells.

It localises to the extracellular vesicle membrane. It is found in the postsynaptic cell membrane. The protein resides in the synapse. The protein localises to the postsynaptic density. Its subcellular location is the early endosome membrane. It localises to the cell projection. It is found in the dendrite. The protein resides in the cytoplasm. The protein localises to the cytoskeleton. Its subcellular location is the cell cortex. It localises to the dendritic spine. It is found in the cytoplasmic vesicle. The protein resides in the secretory vesicle. The protein localises to the acrosome. Its subcellular location is the clathrin-coated vesicle membrane. Master regulator of synaptic plasticity that self-assembles into virion-like capsids that encapsulate RNAs and mediate intercellular RNA transfer in the nervous system. ARC protein is released from neurons in extracellular vesicles that mediate the transfer of ARC mRNA into new target cells, where ARC mRNA can undergo activity-dependent translation. ARC capsids are endocytosed and are able to transfer ARC mRNA into the cytoplasm of neurons. Acts as a key regulator of synaptic plasticity: required for protein synthesis-dependent forms of long-term potentiation (LTP) and depression (LTD) and for the formation of long-term memory. Regulates synaptic plasticity by promoting endocytosis of AMPA receptors (AMPARs) in response to synaptic activity: this endocytic pathway maintains levels of surface AMPARs in response to chronic changes in neuronal activity through synaptic scaling, thereby contributing to neuronal homeostasis. Acts as a postsynaptic mediator of activity-dependent synapse elimination in the developing cerebellum by mediating elimination of surplus climbing fiber synapses. Accumulates at weaker synapses, probably to prevent their undesired enhancement. This suggests that ARC-containing virion-like capsids may be required to eliminate synaptic material. Required to transduce experience into long-lasting changes in visual cortex plasticity and for long-term memory. Involved in postsynaptic trafficking and processing of amyloid-beta A4 (APP) via interaction with PSEN1. In addition to its role in synapses, also involved in the regulation of the immune system: specifically expressed in skin-migratory dendritic cells and regulates fast dendritic cell migration, thereby regulating T-cell activation. The polypeptide is Activity-regulated cytoskeleton-associated protein (Mus musculus (Mouse)).